The primary structure comprises 697 residues: Elongation factor G (697 aa).

The tr-type G domain occupies 8 to 290 (ERYRNFGIMA…AVVDYLPSPL (283 aa)). Residues 17–24 (AHIDAGKT), 88–92 (DTPGH), and 142–145 (NKLD) contribute to the GTP site.

This sequence belongs to the TRAFAC class translation factor GTPase superfamily. Classic translation factor GTPase family. EF-G/EF-2 subfamily.

The protein localises to the cytoplasm. Functionally, catalyzes the GTP-dependent ribosomal translocation step during translation elongation. During this step, the ribosome changes from the pre-translocational (PRE) to the post-translocational (POST) state as the newly formed A-site-bound peptidyl-tRNA and P-site-bound deacylated tRNA move to the P and E sites, respectively. Catalyzes the coordinated movement of the two tRNA molecules, the mRNA and conformational changes in the ribosome. The polypeptide is Elongation factor G (Sphingopyxis alaskensis (strain DSM 13593 / LMG 18877 / RB2256) (Sphingomonas alaskensis)).